A 365-amino-acid chain; its full sequence is Probable dual-specificity RNA methyltransferase RlmN (365 aa).

E99 acts as the Proton acceptor in catalysis. A Radical SAM core domain is found at 105-344 (QSYGLSVCVT…CVVRQEHGTD (240 aa)). C112 and C349 are oxidised to a cystine. The [4Fe-4S] cluster site is built by C119, C123, and C126. S-adenosyl-L-methionine-binding positions include 171–172 (GE), S203, 227–229 (SLH), and N305. C349 (S-methylcysteine intermediate) is an active-site residue.

It belongs to the radical SAM superfamily. RlmN family. [4Fe-4S] cluster serves as cofactor.

The protein resides in the cytoplasm. It catalyses the reaction adenosine(2503) in 23S rRNA + 2 reduced [2Fe-2S]-[ferredoxin] + 2 S-adenosyl-L-methionine = 2-methyladenosine(2503) in 23S rRNA + 5'-deoxyadenosine + L-methionine + 2 oxidized [2Fe-2S]-[ferredoxin] + S-adenosyl-L-homocysteine. The catalysed reaction is adenosine(37) in tRNA + 2 reduced [2Fe-2S]-[ferredoxin] + 2 S-adenosyl-L-methionine = 2-methyladenosine(37) in tRNA + 5'-deoxyadenosine + L-methionine + 2 oxidized [2Fe-2S]-[ferredoxin] + S-adenosyl-L-homocysteine. Its function is as follows. Specifically methylates position 2 of adenine 2503 in 23S rRNA and position 2 of adenine 37 in tRNAs. The polypeptide is Probable dual-specificity RNA methyltransferase RlmN (Lactococcus lactis subsp. cremoris (strain SK11)).